The following is a 1271-amino-acid chain: DNA-directed RNA polymerase subunit beta (1271 aa).

It belongs to the RNA polymerase beta chain family. The RNAP catalytic core consists of 2 alpha, 1 beta, 1 beta' and 1 omega subunit. When a sigma factor is associated with the core the holoenzyme is formed, which can initiate transcription.

It carries out the reaction RNA(n) + a ribonucleoside 5'-triphosphate = RNA(n+1) + diphosphate. Its function is as follows. DNA-dependent RNA polymerase catalyzes the transcription of DNA into RNA using the four ribonucleoside triphosphates as substrates. In Acholeplasma laidlawii (strain PG-8A), this protein is DNA-directed RNA polymerase subunit beta.